The sequence spans 394 residues: MNKYKRIFLVVMDSVGIGEAPDAEQFGDLGSDTIGHIAEHMNGLQMPNMVKLGLGNIREMKGISKVEKPLGYYTKMQEKSTGKDTMTGHWEIMGLYIDTPFQVFPEGFPKELLDELEEKTGRKIIGNKPASGTEILDELGQEQMETGSLIVYTSADSVLQIAAHEEVVPLDELYKICKIARELTLDEKYMVGRVIARPFVGEPGNFTRTPNRHDYALKPFGRTVMNELKDSDYDVIAIGKISDIYDGEGVTESLRTKSNMDGMDKLVDTLNMDFTGLSFLNLVDFDALFGHRRDPQGYGEALQEYDARLPEVFEKLKEDDLLLITADHGNDPVHHGTDHTREYVPLLAYSPSMKEGGQELPLRQTFADIGATVAENFGVKMPEYGTSFLNELKK.

Residues aspartate 13, aspartate 286, histidine 291, aspartate 327, histidine 328, and histidine 339 each contribute to the Mn(2+) site.

This sequence belongs to the phosphopentomutase family. Mn(2+) is required as a cofactor.

The protein localises to the cytoplasm. The enzyme catalyses 2-deoxy-alpha-D-ribose 1-phosphate = 2-deoxy-D-ribose 5-phosphate. It catalyses the reaction alpha-D-ribose 1-phosphate = D-ribose 5-phosphate. The protein operates within carbohydrate degradation; 2-deoxy-D-ribose 1-phosphate degradation; D-glyceraldehyde 3-phosphate and acetaldehyde from 2-deoxy-alpha-D-ribose 1-phosphate: step 1/2. Its function is as follows. Isomerase that catalyzes the conversion of deoxy-ribose 1-phosphate (dRib-1-P) and ribose 1-phosphate (Rib-1-P) to deoxy-ribose 5-phosphate (dRib-5-P) and ribose 5-phosphate (Rib-5-P), respectively. This chain is Phosphopentomutase, found in Bacillus cereus (strain AH187).